Consider the following 259-residue polypeptide: Light-harvesting complex stress-related protein 3.1, chloroplastic (259 aa).

A chloroplast-targeting transit peptide spans 1-45; sequence MLANVVSRKASGLRQTPARATVAVKSVSGRRTTAAEPQTAAPVAA. A chlorophyll b-binding site is contributed by tyrosine 51. Residues phenylalanine 66, glutamate 87, and histidine 90 each coordinate chlorophyll a. Residue arginine 92 participates in chlorophyll b binding. Residues 93-113 traverse the membrane as a helical segment; that stretch reads VAMLAALGFVVGEQLQDFPLF. Residue glutamine 130 participates in chlorophyll a binding. The chain crosses the membrane as a helical span at residues 137–157; that stretch reads EPLLIAIGVAESYRVAVGWAT. Positions 147 and 150 each coordinate chlorophyll b. Chlorophyll a contacts are provided by lysine 196, glutamate 197, asparagine 200, arginine 202, and glutamine 214. A helical membrane pass occupies residues 203–223; the sequence is LAMIAIAAFVAQELVEQTEIF.

It belongs to the light-harvesting chlorophyll a/b-binding (LHC) protein family. In terms of assembly, interacts with the photosystem II-light-harvesting complex II (PSII-LHCII) supercomplex to form PSII-LHCII-LHCSR3 supercomplex.

It localises to the plastid. It is found in the chloroplast thylakoid membrane. Required for non-photochemical quenching (NPQ), a mechanism that converts and dissipates the harmful excess absorbed light energy into heat and protect the photosynthetic apparatus from photo-oxidative damage. NPQ includes dissipating excess light energy to heat (qE) and the reversible coupling of LHCII to photosystems (state transitions or qT), which are considered separate NPQ mechanisms. Is responsible for most of the excess light energy to heat dissipation (qE), also known as energy-dependent chlorophyll fluorescence quenching activity of chlorophyll excited states. Involved in a de-coupling and re-coupling of energy transfer to photosystem II (PSII) during qT. Binds chlorophyll a and b. Is able to sense luminal acidification of the thylakoid membranes, which occurs along with elevated electron flow caused by excess light. Establishes interactions with photosystem II (PSII) antenna components upon lumen acidification, and protonation of lumen-exposed, negatively charged residues both in LHCSR3 and in PSII antenna components. Mediates excitation energy transfer from light-harvesting complex II (LHCII) to photosystem I (PSI), rather than photosystem II (PSII), at low pH, which mimics the acidified lumen of the thylakoid membranes in high light-exposed chloroplasts. Activates PSI-dependent fluorescence quenching in addition to dissipating excitation energy in LHCII to avoid photooxidative stress under excess light. Contributes with PGRL1 to the regulation of electron flow upstream of photosystem I (PSI), and limits the accumulation of electrons on the PSI acceptor side, thus avoiding PSI photoinhibition. This chain is Light-harvesting complex stress-related protein 3.1, chloroplastic, found in Chlamydomonas reinhardtii (Chlamydomonas smithii).